A 1041-amino-acid polypeptide reads, in one-letter code: Isoleucine--tRNA ligase (1041 aa).

Residues 53-63 carry the 'HIGH' region motif; sequence PFANGLPHYGH. Residues 619 to 623 carry the 'KMSKS' region motif; sequence KMSKS. Residue Lys-622 coordinates ATP.

The protein belongs to the class-I aminoacyl-tRNA synthetase family. IleS type 2 subfamily. In terms of assembly, monomer. It depends on Zn(2+) as a cofactor.

It is found in the cytoplasm. The enzyme catalyses tRNA(Ile) + L-isoleucine + ATP = L-isoleucyl-tRNA(Ile) + AMP + diphosphate. Catalyzes the attachment of isoleucine to tRNA(Ile). As IleRS can inadvertently accommodate and process structurally similar amino acids such as valine, to avoid such errors it has two additional distinct tRNA(Ile)-dependent editing activities. One activity is designated as 'pretransfer' editing and involves the hydrolysis of activated Val-AMP. The other activity is designated 'posttransfer' editing and involves deacylation of mischarged Val-tRNA(Ile). The protein is Isoleucine--tRNA ligase (ileS) of Mycobacterium tuberculosis (strain CDC 1551 / Oshkosh).